Consider the following 362-residue polypeptide: MAQIFNFSSGPAMLPAEVLKQAQQELRDWNGLGTSVMEVSHRGKEFIQVAEEAEKDFRDLLNVPSNYKVLFCHGGGRGQFAAVPLNILGDKTTADYVDAGYWAASAIKEAKKYCTPNVFDAKVTVDGLRAVKPMREWQLSDNAAYMHYCPNETIDGIAIDETPDFGKDVVVAADFSSTILSRPIDVSRYGVIYAGAQKNIGPAGLTIVIVREDLLGKANIACPSILDYSILNDNGSMFNTPPTFAWYLSGLVFKWLRANGGVAEMDKINQQKAELLYGVIDNSDFYRNDVAKANRSRMNVPFQLADSALDKLFLEESFAAGLHALKGHRVVGGMRASIYNAMPLEGVKALTDFMVEFERRHG.

L-glutamate is bound by residues Ser-9 and Arg-42. Residues 76–77, Trp-102, Thr-153, Asp-174, and Gln-197 each bind pyridoxal 5'-phosphate; that span reads GR. Lys-198 is modified (N6-(pyridoxal phosphate)lysine). 239 to 240 contributes to the pyridoxal 5'-phosphate binding site; the sequence is NT.

Belongs to the class-V pyridoxal-phosphate-dependent aminotransferase family. SerC subfamily. Homodimer. Requires pyridoxal 5'-phosphate as cofactor.

It localises to the cytoplasm. The enzyme catalyses O-phospho-L-serine + 2-oxoglutarate = 3-phosphooxypyruvate + L-glutamate. It carries out the reaction 4-(phosphooxy)-L-threonine + 2-oxoglutarate = (R)-3-hydroxy-2-oxo-4-phosphooxybutanoate + L-glutamate. It functions in the pathway amino-acid biosynthesis; L-serine biosynthesis; L-serine from 3-phospho-D-glycerate: step 2/3. The protein operates within cofactor biosynthesis; pyridoxine 5'-phosphate biosynthesis; pyridoxine 5'-phosphate from D-erythrose 4-phosphate: step 3/5. Functionally, catalyzes the reversible conversion of 3-phosphohydroxypyruvate to phosphoserine and of 3-hydroxy-2-oxo-4-phosphonooxybutanoate to phosphohydroxythreonine. This Escherichia coli O139:H28 (strain E24377A / ETEC) protein is Phosphoserine aminotransferase.